We begin with the raw amino-acid sequence, 475 residues long: Ribulose bisphosphate carboxylase large chain (475 aa).

Residues 1 to 2 constitute a propeptide that is removed on maturation; it reads MS. Residue P3 is modified to N-acetylproline. The residue at position 14 (K14) is an N6,N6,N6-trimethyllysine. Substrate is bound by residues N123 and T173. Catalysis depends on K175, which acts as the Proton acceptor. K177 provides a ligand contact to substrate. 3 residues coordinate Mg(2+): K201, D203, and E204. K201 carries the post-translational modification N6-carboxylysine. The active-site Proton acceptor is H294. 3 residues coordinate substrate: R295, H327, and S379.

It belongs to the RuBisCO large chain family. Type I subfamily. As to quaternary structure, heterohexadecamer of 8 large chains and 8 small chains; disulfide-linked. The disulfide link is formed within the large subunit homodimers. Requires Mg(2+) as cofactor. Post-translationally, the disulfide bond which can form in the large chain dimeric partners within the hexadecamer appears to be associated with oxidative stress and protein turnover.

It is found in the plastid. It localises to the chloroplast. The enzyme catalyses 2 (2R)-3-phosphoglycerate + 2 H(+) = D-ribulose 1,5-bisphosphate + CO2 + H2O. It carries out the reaction D-ribulose 1,5-bisphosphate + O2 = 2-phosphoglycolate + (2R)-3-phosphoglycerate + 2 H(+). RuBisCO catalyzes two reactions: the carboxylation of D-ribulose 1,5-bisphosphate, the primary event in carbon dioxide fixation, as well as the oxidative fragmentation of the pentose substrate in the photorespiration process. Both reactions occur simultaneously and in competition at the same active site. The polypeptide is Ribulose bisphosphate carboxylase large chain (Carpinus caroliniana (American hornbeam)).